Consider the following 147-residue polypeptide: Protein LOL1 (147 aa).

The tract at residues 1 to 38 (MVASRAPRSESPWLKKPMHGVSGSTAMASTPWSSMPPS) is disordered. A compositionally biased stretch (polar residues) spans 22–38 (SGSTAMASTPWSSMPPS). The putative zinc finger stretch occupies residues 47 to 77 (QLVCSGCRNLLMYPAGATSICCAVCGTVTAV).

The protein localises to the nucleus. In terms of biological role, putative zinc finger that may be involved in programmed cell death and defense response. This Oryza sativa subsp. japonica (Rice) protein is Protein LOL1 (LOL1).